Consider the following 416-residue polypeptide: TNF receptor-associated factor 1 (416 aa).

A disordered region spans residues M1 to P24. Position 146 is a phosphoserine (S146). A coiled-coil region spans residues M182 to S264. Glycyl lysine isopeptide (Lys-Gly) (interchain with G-Cter in ubiquitin) cross-links involve residues K185 and K193. The MATH domain occupies D266–V412.

As to quaternary structure, homotrimer. Heterotrimer with TRAF2. Interacts with TNFRSF1A/TNFR1, TNFRSF1B/TNFR2, TNFRSF4, TNFRSF5/CD40, TNFRSF8/CD30, TNFRSF9/CD137, TNFRSF11A/RANK, TNFRSF13C, TNFRSF18/AITR, TNFRSF17/BCMA, TNFRSF19/TROY, TNFRSF19L/RELT, XEDAR, EDAR, Epstein-Barr virus BNFL1/LMP-1, TANK/ITRAF, TRAIP and RIPK2. Interacts with BIRC2 and BIRC3 N-terminus; a single BIRC2 or BIRC3 molecule interacts with a heterotrimer formed by TRAF1 and TRAF2. Interacts with NFATC2IP, TRAFD1 and with HIVEP3. Interacts with MAP3K14. Interacts with GPS2. In terms of processing, polyubiquitinated by BIRC2 and/or BIRC3, leading to its subsequent proteasomal degradation. Ubiquitinated by the SCF(FBXL2) complex, leading to its degradation by the proteasome.

Adapter molecule that regulates the activation of NF-kappa-B and JNK. Plays a role in the regulation of cell survival and apoptosis. The heterotrimer formed by TRAF1 and TRAF2 is part of a E3 ubiquitin-protein ligase complex that promotes ubiquitination of target proteins, such as MAP3K14. The TRAF1/TRAF2 complex recruits the antiapoptotic E3 protein-ubiquitin ligases BIRC2 and BIRC3 to TNFRSF1B/TNFR2. The chain is TNF receptor-associated factor 1 (TRAF1) from Homo sapiens (Human).